A 92-amino-acid polypeptide reads, in one-letter code: C-C motif chemokine 4 (92 aa).

The N-terminal stretch at 1 to 23 (MKLCVTVLSLLVLAAAFCSPALS) is a signal peptide. Cystine bridges form between Cys34–Cys58 and Cys35–Cys74.

Belongs to the intercrine beta (chemokine CC) family. As to quaternary structure, homodimer. Interacts with CCR5. As to expression, detected in peripheral blood mononuclear cells and lymph nodes.

Its subcellular location is the secreted. In terms of biological role, monokine with inflammatory and chemokinetic properties. This chain is C-C motif chemokine 4 (CCL4), found in Macaca mulatta (Rhesus macaque).